Here is an 868-residue protein sequence, read N- to C-terminus: Coatomer subunit gamma (868 aa).

Positions 1–11 are enriched in basic residues; it reads MWRTKRGRTRR. The interval 1-22 is disordered; that stretch reads MWRTKRGRTRRRDAGGNPWQNL. 4 HEAT repeats span residues 64 to 101, 287 to 324, 326 to 359, and 360 to 396; these read REATECFFAMTKLFQSKDVVMRRMVYLGIKELSPIADD, RELSTAVSILQLFCGSSKATLRFAAVRTMNKVAMLHPP, VNVCNLDLEGLIADSNRSVATLAITTLLKTGAES, and SVERLMKQIATFVAEISDEFKLVVVQAIRSLCTKFPR.

This sequence belongs to the COPG family. In terms of assembly, oligomeric complex that consists of at least the alpha, beta, beta', gamma, delta, epsilon and zeta subunits.

It is found in the cytoplasm. Its subcellular location is the golgi apparatus membrane. It localises to the cytoplasmic vesicle. The protein localises to the COPI-coated vesicle membrane. The protein resides in the endoplasmic reticulum. The coatomer is a cytosolic protein complex that binds to dilysine motifs and reversibly associates with Golgi non-clathrin-coated vesicles, which further mediate biosynthetic protein transport from the ER, via the Golgi up to the trans Golgi network. Coatomer complex is required for budding from Golgi membranes, and is essential for the retrograde Golgi-to-ER transport of dilysine-tagged proteins. In Anopheles gambiae (African malaria mosquito), this protein is Coatomer subunit gamma.